The chain runs to 259 residues: Phosphatidylserine decarboxylase proenzyme (259 aa).

Residues Asp-86, His-142, and Ser-226 each act as charge relay system; for autoendoproteolytic cleavage activity in the active site. Residue Ser-226 is the Schiff-base intermediate with substrate; via pyruvic acid; for decarboxylase activity of the active site. At Ser-226 the chain carries Pyruvic acid (Ser); by autocatalysis.

The protein belongs to the phosphatidylserine decarboxylase family. PSD-B subfamily. Prokaryotic type I sub-subfamily. Heterodimer of a large membrane-associated beta subunit and a small pyruvoyl-containing alpha subunit. The cofactor is pyruvate. Post-translationally, is synthesized initially as an inactive proenzyme. Formation of the active enzyme involves a self-maturation process in which the active site pyruvoyl group is generated from an internal serine residue via an autocatalytic post-translational modification. Two non-identical subunits are generated from the proenzyme in this reaction, and the pyruvate is formed at the N-terminus of the alpha chain, which is derived from the carboxyl end of the proenzyme. The autoendoproteolytic cleavage occurs by a canonical serine protease mechanism, in which the side chain hydroxyl group of the serine supplies its oxygen atom to form the C-terminus of the beta chain, while the remainder of the serine residue undergoes an oxidative deamination to produce ammonia and the pyruvoyl prosthetic group on the alpha chain. During this reaction, the Ser that is part of the protease active site of the proenzyme becomes the pyruvoyl prosthetic group, which constitutes an essential element of the active site of the mature decarboxylase.

It localises to the cell membrane. It catalyses the reaction a 1,2-diacyl-sn-glycero-3-phospho-L-serine + H(+) = a 1,2-diacyl-sn-glycero-3-phosphoethanolamine + CO2. Its pathway is phospholipid metabolism; phosphatidylethanolamine biosynthesis; phosphatidylethanolamine from CDP-diacylglycerol: step 2/2. Catalyzes the formation of phosphatidylethanolamine (PtdEtn) from phosphatidylserine (PtdSer). The chain is Phosphatidylserine decarboxylase proenzyme from Geobacillus sp. (strain WCH70).